A 919-amino-acid chain; its full sequence is Eukaryotic translation initiation factor 3 subunit C (919 aa).

Positions 1 to 28 (MSRFFANGSDSESESSEEEVQAPNFNKA) are disordered. Residues 11–20 (SESESSEEEV) show a composition bias toward acidic residues. Phosphoserine is present on residues S34, S165, and S177. The disordered stretch occupies residues 154–275 (LSRFRENPQE…EQKIKLRKRA (122 aa)). Over residues 162–171 (QEESENEDEE) the composition is skewed to acidic residues. A compositionally biased stretch (acidic residues) spans 210 to 236 (ADDEDSDESIDWDPDTESETESSEDEN). Residues 241–269 (MRERFLKRSTEKDDKDDDKRKDKRKEQKI) show a composition bias toward basic and acidic residues. The region spanning 640-816 (FHMHINLELL…ETVVMHRSEP (177 aa)) is the PCI domain. Positions 848–919 (FFQRGNMGNR…QQQVQTIDEE (72 aa)) are disordered. The segment covering 883–894 (QRNRNQRGHHKN) has biased composition (basic residues). Positions 895-919 (QQNQNQQQQQQHQREQQQVQTIDEE) are enriched in low complexity.

The protein belongs to the eIF-3 subunit C family. In terms of assembly, component of the eukaryotic translation initiation factor 3 (eIF-3) complex. The eIF-3 complex interacts with pix.

Its subcellular location is the cytoplasm. In terms of biological role, component of the eukaryotic translation initiation factor 3 (eIF-3) complex, which is involved in protein synthesis of a specialized repertoire of mRNAs and, together with other initiation factors, stimulates binding of mRNA and methionyl-tRNAi to the 40S ribosome. The eIF-3 complex specifically targets and initiates translation of a subset of mRNAs involved in cell proliferation. This Drosophila willistoni (Fruit fly) protein is Eukaryotic translation initiation factor 3 subunit C.